Here is a 149-residue protein sequence, read N- to C-terminus: Cytochrome c' (149 aa).

The first 19 residues, 1-19, serve as a signal peptide directing secretion; that stretch reads MRRVLLATLMAALPAAAMA. Positions 29, 89, 90, 138, 141, and 142 each coordinate heme c.

Monomer and homodimer. Binds 1 heme c group covalently per subunit.

Its function is as follows. Cytochrome c' is the most widely occurring bacterial c-type cytochrome. Cytochromes c' are high-spin proteins and the heme has no sixth ligand. Their exact function is not known. In Cereibacter sphaeroides (strain ATCC 17023 / DSM 158 / JCM 6121 / CCUG 31486 / LMG 2827 / NBRC 12203 / NCIMB 8253 / ATH 2.4.1.) (Rhodobacter sphaeroides), this protein is Cytochrome c' (cycP).